The following is a 275-amino-acid chain: Large ribosomal subunit protein uL2 (275 aa).

A disordered region spans residues 208–275 (AGAKRWRGRR…NMIIRDRRKK (68 aa)). 2 stretches are compositionally biased toward basic residues: residues 209 to 219 (GAKRWRGRRPT) and 254 to 263 (KGYKTRRNKR).

It belongs to the universal ribosomal protein uL2 family. In terms of assembly, part of the 50S ribosomal subunit. Forms a bridge to the 30S subunit in the 70S ribosome.

In terms of biological role, one of the primary rRNA binding proteins. Required for association of the 30S and 50S subunits to form the 70S ribosome, for tRNA binding and peptide bond formation. It has been suggested to have peptidyltransferase activity; this is somewhat controversial. Makes several contacts with the 16S rRNA in the 70S ribosome. The chain is Large ribosomal subunit protein uL2 from Coxiella burnetii (strain CbuK_Q154) (Coxiella burnetii (strain Q154)).